The primary structure comprises 362 residues: Glutaminyl-peptide cyclotransferase (362 aa).

The N-terminal stretch at 1–35 is a signal peptide; it reads MAGSEDKRVVGTLHLLLLQATVLSLTAGNLSLVSA. N-linked (GlcNAc...) asparagine glycans are attached at residues asparagine 29 and asparagine 50. Cysteine 140 and cysteine 165 are disulfide-bonded. Position 160 (aspartate 160) interacts with Zn(2+). The Proton acceptor role is filled by glutamate 202. A Zn(2+)-binding site is contributed by glutamate 203. Residue aspartate 249 is the Proton acceptor of the active site. A Zn(2+)-binding site is contributed by histidine 331.

It belongs to the glutaminyl-peptide cyclotransferase family.

The protein localises to the secreted. The enzyme catalyses N-terminal L-glutaminyl-[peptide] = N-terminal 5-oxo-L-prolyl-[peptide] + NH4(+). In terms of biological role, responsible for the biosynthesis of pyroglutamyl peptides. Has a bias against acidic and tryptophan residues adjacent to the N-terminal glutaminyl residue and a lack of importance of chain length after the second residue. In Mus musculus (Mouse), this protein is Glutaminyl-peptide cyclotransferase (Qpct).